Reading from the N-terminus, the 239-residue chain is 7-cyano-7-deazaguanine synthase (239 aa).

Residue F16–L26 participates in ATP binding. Zn(2+) contacts are provided by C204, C219, C222, and C225.

The protein belongs to the QueC family. Zn(2+) is required as a cofactor.

The enzyme catalyses 7-carboxy-7-deazaguanine + NH4(+) + ATP = 7-cyano-7-deazaguanine + ADP + phosphate + H2O + H(+). The protein operates within purine metabolism; 7-cyano-7-deazaguanine biosynthesis. Functionally, catalyzes the ATP-dependent conversion of 7-carboxy-7-deazaguanine (CDG) to 7-cyano-7-deazaguanine (preQ(0)). This chain is 7-cyano-7-deazaguanine synthase, found in Polaromonas naphthalenivorans (strain CJ2).